We begin with the raw amino-acid sequence, 280 residues long: Putative high affinity immunoglobulin gamma Fc receptor IB (280 aa).

The signal sequence occupies residues 1 to 15 (MWFLTTLLLWVPVDG). Residues 16-198 (QVDTTKAVIT…LQLPTPVWFH (183 aa)) lie on the Extracellular side of the membrane. Ig-like C2-type domains lie at 22 to 101 (AVIT…LEIH) and 95 to 184 (PIQL…ISQY). 2 disulfides stabilise this stretch: Cys43/Cys85 and Cys124/Cys168. 3 N-linked (GlcNAc...) asparagine glycosylation sites follow: Asn59, Asn152, and Asn163. A helical membrane pass occupies residues 199–219 (VLFYLAVGIMFLVNTVLWVTI). The Cytoplasmic portion of the chain corresponds to 220-280 (RKELKRKKKW…VHRKEPQGAT (61 aa)). The interval 258–280 (KCQEQKEEQLQEGVHRKEPQGAT) is disordered.

It belongs to the immunoglobulin superfamily. FCGR1 family.

The protein resides in the cell membrane. Functionally, may bind to the Fc region of immunoglobulins gamma with a low affinity compared to FCGR1A. May function in the humoral immune response. This chain is Putative high affinity immunoglobulin gamma Fc receptor IB, found in Homo sapiens (Human).